A 689-amino-acid chain; its full sequence is Glycine--tRNA ligase beta subunit (689 aa).

It belongs to the class-II aminoacyl-tRNA synthetase family. In terms of assembly, tetramer of two alpha and two beta subunits.

It localises to the cytoplasm. The enzyme catalyses tRNA(Gly) + glycine + ATP = glycyl-tRNA(Gly) + AMP + diphosphate. The polypeptide is Glycine--tRNA ligase beta subunit (Shewanella sediminis (strain HAW-EB3)).